The chain runs to 382 residues: Putative oxidoreductase C1F5.03c (382 aa).

A helical transmembrane segment spans residues 7–27 (IVIVGGGITGVSCLYFLAHHP).

This sequence belongs to the TDA3 family.

It localises to the cytoplasm. The protein resides in the membrane. In terms of biological role, putative oxidoreductase that negatively regulates the retrieval of cargo from late endosomes to the Golgi. The polypeptide is Putative oxidoreductase C1F5.03c (Schizosaccharomyces pombe (strain 972 / ATCC 24843) (Fission yeast)).